The chain runs to 232 residues: Ubiquinone biosynthesis O-methyltransferase (232 aa).

Residues Arg-36, Gly-55, Asp-76, and Leu-120 each coordinate S-adenosyl-L-methionine.

Belongs to the methyltransferase superfamily. UbiG/COQ3 family.

It catalyses the reaction a 3-demethylubiquinol + S-adenosyl-L-methionine = a ubiquinol + S-adenosyl-L-homocysteine + H(+). The enzyme catalyses a 3-(all-trans-polyprenyl)benzene-1,2-diol + S-adenosyl-L-methionine = a 2-methoxy-6-(all-trans-polyprenyl)phenol + S-adenosyl-L-homocysteine + H(+). The protein operates within cofactor biosynthesis; ubiquinone biosynthesis. In terms of biological role, O-methyltransferase that catalyzes the 2 O-methylation steps in the ubiquinone biosynthetic pathway. The protein is Ubiquinone biosynthesis O-methyltransferase of Pseudomonas paraeruginosa (strain DSM 24068 / PA7) (Pseudomonas aeruginosa (strain PA7)).